The following is a 315-amino-acid chain: Beta-ketoacyl-[acyl-carrier-protein] synthase III 2 (315 aa).

Residues cysteine 113 and histidine 241 contribute to the active site. Positions 242–246 (QANLR) are ACP-binding. Asparagine 271 is an active-site residue.

The protein belongs to the thiolase-like superfamily. FabH family. Homodimer.

It localises to the cytoplasm. It catalyses the reaction malonyl-[ACP] + acetyl-CoA + H(+) = 3-oxobutanoyl-[ACP] + CO2 + CoA. Its pathway is lipid metabolism; fatty acid biosynthesis. Catalyzes the condensation reaction of fatty acid synthesis by the addition to an acyl acceptor of two carbons from malonyl-ACP. Catalyzes the first condensation reaction which initiates fatty acid synthesis and may therefore play a role in governing the total rate of fatty acid production. Possesses both acetoacetyl-ACP synthase and acetyl transacylase activities. Its substrate specificity determines the biosynthesis of branched-chain and/or straight-chain of fatty acids. This chain is Beta-ketoacyl-[acyl-carrier-protein] synthase III 2, found in Streptomyces avermitilis (strain ATCC 31267 / DSM 46492 / JCM 5070 / NBRC 14893 / NCIMB 12804 / NRRL 8165 / MA-4680).